The sequence spans 297 residues: Probable porphobilinogen deaminase (297 aa).

The residue at position 233 (Cys233) is an S-(dipyrrolylmethanemethyl)cysteine.

Belongs to the HMBS family. It depends on dipyrromethane as a cofactor.

The catalysed reaction is 4 porphobilinogen + H2O = hydroxymethylbilane + 4 NH4(+). It functions in the pathway porphyrin-containing compound metabolism; protoporphyrin-IX biosynthesis; coproporphyrinogen-III from 5-aminolevulinate: step 2/4. Tetrapolymerization of the monopyrrole PBG into the hydroxymethylbilane pre-uroporphyrinogen in several discrete steps. This chain is Probable porphobilinogen deaminase, found in Thermoplasma volcanium (strain ATCC 51530 / DSM 4299 / JCM 9571 / NBRC 15438 / GSS1).